Consider the following 438-residue polypeptide: Glycerophosphocholine cholinephosphodiesterase ENPP6 (438 aa).

A signal peptide spans 1–22 (MTRTLLKIYTLFILLLCRQRDA). Substrate contacts are provided by aspartate 32, serine 69, and asparagine 90. Aspartate 32 and serine 69 together coordinate Zn(2+). Residue serine 69 is the Nucleophile of the active site. Position 69 is a phosphoserine (serine 69). Cysteine 140 and cysteine 152 are oxidised to a cystine. Positions 162-226 (KNLTDSMENA…ILNQKIREKN (65 aa)) form a coiled coil. Residue asparagine 163 is glycosylated (N-linked (GlcNAc...) asparagine). Position 191 (aspartate 191) interacts with substrate. Residues aspartate 191, histidine 195, aspartate 238, and histidine 239 each contribute to the Zn(2+) site. Residue histidine 239 coordinates substrate. N-linked (GlcNAc...) asparagine glycans are attached at residues asparagine 258, asparagine 287, and asparagine 339. Histidine 352 serves as a coordination point for substrate. Residue histidine 352 coordinates Zn(2+). A glycan (N-linked (GlcNAc...) asparagine) is linked at asparagine 402. Serine 415 is lipidated: GPI-anchor amidated serine. Positions 416 to 438 (AATAGASLISCCFLLLLTLTGVC) are cleaved as a propeptide — removed in mature form.

This sequence belongs to the nucleotide pyrophosphatase/phosphodiesterase family. Zn(2+) serves as cofactor.

It localises to the cell membrane. The enzyme catalyses sn-glycerol 3-phosphocholine + H2O = phosphocholine + glycerol + H(+). The catalysed reaction is a 1-acyl-sn-glycero-3-phosphocholine + H2O = a 1-acyl-sn-glycerol + phosphocholine + H(+). It catalyses the reaction a 1-O-alkyl-sn-glycero-3-phosphocholine + H2O = a 1-O-alkyl-sn-glycerol + phosphocholine + H(+). It carries out the reaction 1-dodecanoyl-sn-glycero-3-phosphocholine + H2O = 1-dodecanoyl-sn-glycerol + phosphocholine + H(+). The enzyme catalyses 1-hexadecanoyl-sn-glycero-3-phosphocholine + H2O = 1-hexadecanoyl-sn-glycerol + phosphocholine + H(+). The catalysed reaction is 1-(5Z,8Z,11Z,14Z-eicosatetraenoyl)-sn-glycero-3-phosphocholine + H2O = 1-(5Z,8Z,11Z,14Z-eicosatetraenoyl)-sn-glycerol + phosphocholine + H(+). It catalyses the reaction 1-tetradecanoyl-sn-glycero-3-phosphocholine + H2O = 1-tetradecanoyl-sn-glycerol + phosphocholine + H(+). It carries out the reaction sphing-4-enine-phosphocholine + H2O = sphing-4-enine + phosphocholine + H(+). The enzyme catalyses 1-(9Z-octadecenoyl)-sn-glycero-3-phosphocholine + H2O = 1-(9Z-octadecenoyl)-sn-glycerol + phosphocholine + H(+). The catalysed reaction is 1-(9Z,12Z)-octadecadienoyl-sn-glycero-3-phosphocholine + H2O = 1-(9Z,12Z-octadecadienoyl)-sn-glycerol + phosphocholine + H(+). It catalyses the reaction glycero-2-phosphocholine + H2O = phosphocholine + glycerol + H(+). Choline-specific glycerophosphodiesterase that hydrolyzes glycerophosphocholine (GPC) and lysophosphatidylcholine (LPC) and contributes to supplying choline to the cells. Has a preference for LPC with short (12:0 and 14:0) or polyunsaturated (18:2 and 20:4) fatty acids. In vitro, hydrolyzes only choline-containing lysophospholipids, such as sphingosylphosphorylcholine (SPC), platelet-activating factor (PAF) and lysoPAF, but not other lysophospholipids. The sequence is that of Glycerophosphocholine cholinephosphodiesterase ENPP6 from Danio rerio (Zebrafish).